Here is a 546-residue protein sequence, read N- to C-terminus: Arginine--tRNA ligase (546 aa).

The 'HIGH' region motif lies at 117–127; sequence ANPTGPLHIGR.

This sequence belongs to the class-I aminoacyl-tRNA synthetase family.

It is found in the cytoplasm. The catalysed reaction is tRNA(Arg) + L-arginine + ATP = L-arginyl-tRNA(Arg) + AMP + diphosphate. The polypeptide is Arginine--tRNA ligase (Thermoplasma acidophilum (strain ATCC 25905 / DSM 1728 / JCM 9062 / NBRC 15155 / AMRC-C165)).